A 426-amino-acid chain; its full sequence is DUF724 domain-containing protein 9 (426 aa).

Polar residues-rich tracts occupy residues 164–184 (ESSLTQGSGDETSDSVRNANE) and 213–222 (PRNQNASVND). Residues 164-248 (ESSLTQGSGD…REESLCSDAS (85 aa)) form a disordered region. Positions 223–242 (STRENENSEDINRKRKREES) are enriched in basic and acidic residues. In terms of domain architecture, DUF724 spans 256–425 (LPFEKKLSIW…LQFQTTASAP (170 aa)). The stretch at 370–402 (AEKESIKIENERKILELQRLNEEVDKEIAQSKS) forms a coiled coil.

Expressed in flowers.

The protein resides in the nucleus. Its function is as follows. May be involved in the polar growth of plant cells via transportation of RNAs. In Arabidopsis thaliana (Mouse-ear cress), this protein is DUF724 domain-containing protein 9.